A 364-amino-acid chain; its full sequence is Fructose-bisphosphate aldolase A (364 aa).

At tyrosine 5 the chain carries Phosphotyrosine. Threonine 9 carries the phosphothreonine modification. A phosphoserine mark is found at serine 36 and serine 39. Lysine 42 bears the N6-acetyllysine; alternate mark. A Glycyl lysine isopeptide (Lys-Gly) (interchain with G-Cter in SUMO1); alternate cross-link involves residue lysine 42. A Glycyl lysine isopeptide (Lys-Gly) (interchain with G-Cter in SUMO2); alternate cross-link involves residue lysine 42. Arginine 43 serves as a coordination point for beta-D-fructose 1,6-bisphosphate. Serine 46 carries the post-translational modification Phosphoserine. An N6-(2-hydroxyisobutyryl)lysine modification is found at lysine 99. Lysine 108 carries the post-translational modification N6-acetyllysine. Lysine 111 is modified (N6-acetyllysine; alternate). Lysine 111 bears the N6-malonyllysine; alternate mark. Residue serine 132 is modified to Phosphoserine. Lysine 147 is subject to N6-(2-hydroxyisobutyryl)lysine. Glutamate 188 acts as the Proton acceptor in catalysis. Lysine 230 functions as the Schiff-base intermediate with dihydroxyacetone-P in the catalytic mechanism. A Phosphoserine modification is found at serine 272. Beta-D-fructose 1,6-bisphosphate-binding positions include 272 to 274 (SGG), serine 301, and arginine 304. At lysine 312 the chain carries N6-malonyllysine. Residue lysine 330 is modified to N6-acetyllysine.

It belongs to the class I fructose-bisphosphate aldolase family. Homotetramer. Interacts with SNX9 and WAS. Interacts with FBP2; the interaction blocks FBP2 inhibition by physiological concentrations of AMP and reduces inhibition by Ca(2+).

It localises to the cytoplasm. Its subcellular location is the myofibril. It is found in the sarcomere. The protein resides in the i band. The protein localises to the m line. The enzyme catalyses beta-D-fructose 1,6-bisphosphate = D-glyceraldehyde 3-phosphate + dihydroxyacetone phosphate. Its pathway is carbohydrate degradation; glycolysis; D-glyceraldehyde 3-phosphate and glycerone phosphate from D-glucose: step 4/4. Catalyzes the reversible conversion of beta-D-fructose 1,6-bisphosphate (FBP) into two triose phosphate and plays a key role in glycolysis and gluconeogenesis. In addition, may also function as scaffolding protein. The sequence is that of Fructose-bisphosphate aldolase A (ALDOA) from Pongo abelii (Sumatran orangutan).